The chain runs to 476 residues: UDP-N-acetylmuramate--L-alanine ligase (476 aa).

112 to 118 lines the ATP pocket; it reads GTHGKTT.

Belongs to the MurCDEF family.

It is found in the cytoplasm. It carries out the reaction UDP-N-acetyl-alpha-D-muramate + L-alanine + ATP = UDP-N-acetyl-alpha-D-muramoyl-L-alanine + ADP + phosphate + H(+). The protein operates within cell wall biogenesis; peptidoglycan biosynthesis. In terms of biological role, cell wall formation. The chain is UDP-N-acetylmuramate--L-alanine ligase from Magnetococcus marinus (strain ATCC BAA-1437 / JCM 17883 / MC-1).